The chain runs to 258 residues: Type III pantothenate kinase (258 aa).

An ATP-binding site is contributed by 6 to 13 (DVGNSDTV). 108-111 (GSDR) is a substrate binding site. The Proton acceptor role is filled by Asp110. Asp130 contributes to the K(+) binding site. Thr133 contributes to the ATP binding site. Residue Thr185 coordinates substrate.

The protein belongs to the type III pantothenate kinase family. As to quaternary structure, homodimer. NH4(+) is required as a cofactor. The cofactor is K(+).

Its subcellular location is the cytoplasm. The catalysed reaction is (R)-pantothenate + ATP = (R)-4'-phosphopantothenate + ADP + H(+). It functions in the pathway cofactor biosynthesis; coenzyme A biosynthesis; CoA from (R)-pantothenate: step 1/5. In terms of biological role, catalyzes the phosphorylation of pantothenate (Pan), the first step in CoA biosynthesis. The chain is Type III pantothenate kinase from Thermobifida fusca (strain YX).